Reading from the N-terminus, the 257-residue chain is Homeobox protein goosecoid (257 aa).

Positions 160 to 219 (KRRHRTIFTDEQLEALENLFQETKYPDVGTREQLARKVHLREEKVEVWFKNRRAKWRRQK) form a DNA-binding region, homeobox. The interval 213–257 (AKWRRQKRSSSEESENAEKWNKTSSSKASPEKREEEGKSDLDSDS) is disordered. Residues 241-257 (SPEKREEEGKSDLDSDS) show a composition bias toward basic and acidic residues.

It belongs to the paired homeobox family. Bicoid subfamily.

The protein resides in the nucleus. Regulates chordin (CHRD). May play a role in spatial programing within discrete embryonic fields or lineage compartments during organogenesis. In concert with NKX3-2, plays a role in defining the structural components of the middle ear; required for the development of the entire tympanic ring. Probably involved in the regulatory networks that define neural crest cell fate specification and determine mesoderm cell lineages in mammals. The chain is Homeobox protein goosecoid (GSC) from Pongo pygmaeus (Bornean orangutan).